The sequence spans 129 residues: NADH-ubiquinone oxidoreductase chain 3 (129 aa).

The next 3 membrane-spanning stretches (helical) occupy residues 4–24 (FYMY…WLLA), 48–68 (AAFS…DLEI), and 82–102 (GLYG…AFIL).

The protein belongs to the complex I subunit 3 family.

The protein localises to the mitochondrion membrane. The catalysed reaction is a ubiquinone + NADH + 5 H(+)(in) = a ubiquinol + NAD(+) + 4 H(+)(out). Core subunit of the mitochondrial membrane respiratory chain NADH dehydrogenase (Complex I) that is believed to belong to the minimal assembly required for catalysis. Complex I functions in the transfer of electrons from NADH to the respiratory chain. The immediate electron acceptor for the enzyme is believed to be ubiquinone. The protein is NADH-ubiquinone oxidoreductase chain 3 (NAD3) of Candida albicans (strain SC5314 / ATCC MYA-2876) (Yeast).